A 690-amino-acid polypeptide reads, in one-letter code: Elongation factor G (690 aa).

One can recognise a tr-type G domain in the interval 8 to 283; sequence EDYRNFGIMA…AVVDYLPSPL (276 aa). Residues 17–24, 81–85, and 135–138 each bind GTP; these read AHIDAGKT, DTPGH, and NKMD.

The protein belongs to the TRAFAC class translation factor GTPase superfamily. Classic translation factor GTPase family. EF-G/EF-2 subfamily.

The protein localises to the cytoplasm. Its function is as follows. Catalyzes the GTP-dependent ribosomal translocation step during translation elongation. During this step, the ribosome changes from the pre-translocational (PRE) to the post-translocational (POST) state as the newly formed A-site-bound peptidyl-tRNA and P-site-bound deacylated tRNA move to the P and E sites, respectively. Catalyzes the coordinated movement of the two tRNA molecules, the mRNA and conformational changes in the ribosome. In Bradyrhizobium sp. (strain BTAi1 / ATCC BAA-1182), this protein is Elongation factor G.